A 374-amino-acid polypeptide reads, in one-letter code: GDSL esterase/lipase At3g50400 (374 aa).

An N-terminal signal peptide occupies residues 1-26; sequence MKKSIFFVPVLVLFFFGSRFSRVASA. Serine 41 serves as the catalytic Nucleophile. 2 N-linked (GlcNAc...) asparagine glycosylation sites follow: asparagine 104 and asparagine 125. Catalysis depends on residues aspartate 339 and histidine 342.

It belongs to the 'GDSL' lipolytic enzyme family.

It is found in the secreted. This is GDSL esterase/lipase At3g50400 from Arabidopsis thaliana (Mouse-ear cress).